We begin with the raw amino-acid sequence, 152 residues long: MSQLCPCGSAVEYSLCCHPYVFGEKVAPDPEHLMRSRYCAFVMQDADYLIKTWHPSCGAAALRAELIAGFAHTEWLGLTVFEHCWQDGGNIGFVSFVARFTEGGKTGAIIERSRFLKENGQWYYIDGTRPQFGRNDPCPCGSGKKFKKCCGQ.

This sequence belongs to the UPF0225 family.

The polypeptide is UPF0225 protein YchJ (Escherichia coli O81 (strain ED1a)).